The primary structure comprises 596 residues: Actin-related protein 9 (596 aa).

The interval 148–178 is disordered; the sequence is LASPAETSPDKGDASASEAVPDVTDSKDTSE.

It belongs to the actin family. ARP8 subfamily.

The polypeptide is Actin-related protein 9 (ARP9) (Arabidopsis thaliana (Mouse-ear cress)).